The primary structure comprises 1036 residues: Mediator of RNA polymerase II transcription subunit 24 (1036 aa).

It belongs to the Mediator complex subunit 24 family. Component of the Mediator complex.

It is found in the nucleus. In terms of biological role, component of the Mediator complex, a coactivator involved in the regulated transcription of nearly all RNA polymerase II-dependent genes. Mediator functions as a bridge to convey information from gene-specific regulatory proteins to the basal RNA polymerase II transcription machinery. Mediator is recruited to promoters by direct interactions with regulatory proteins and serves as a scaffold for the assembly of a functional preinitiation complex with RNA polymerase II and the general transcription factors. This Anopheles gambiae (African malaria mosquito) protein is Mediator of RNA polymerase II transcription subunit 24 (MED24).